The sequence spans 290 residues: Shikimate dehydrogenase (NADP(+)) (290 aa).

Shikimate is bound by residues 22–24 and Thr-68; that span reads SLS. The active-site Proton acceptor is Lys-72. Residues Asn-93 and Asp-108 each contribute to the shikimate site. NADP(+)-binding positions include 133 to 137 and Ile-228; that span reads GSGGS. Tyr-230 is a binding site for shikimate. Gly-251 provides a ligand contact to NADP(+).

This sequence belongs to the shikimate dehydrogenase family. Homodimer.

It catalyses the reaction shikimate + NADP(+) = 3-dehydroshikimate + NADPH + H(+). It functions in the pathway metabolic intermediate biosynthesis; chorismate biosynthesis; chorismate from D-erythrose 4-phosphate and phosphoenolpyruvate: step 4/7. Its function is as follows. Involved in the biosynthesis of the chorismate, which leads to the biosynthesis of aromatic amino acids. Catalyzes the reversible NADPH linked reduction of 3-dehydroshikimate (DHSA) to yield shikimate (SA). This Leptospira borgpetersenii serovar Hardjo-bovis (strain JB197) protein is Shikimate dehydrogenase (NADP(+)).